The chain runs to 288 residues: Diaminopimelate epimerase (288 aa).

Residues asparagine 14 and asparagine 67 each contribute to the substrate site. The active-site Proton donor is the cysteine 76. Substrate contacts are provided by residues 77-78 (GN), asparagine 166, asparagine 199, and 217-218 (ER). The active-site Proton acceptor is cysteine 226. 227–228 (GT) provides a ligand contact to substrate.

It belongs to the diaminopimelate epimerase family. In terms of assembly, homodimer.

Its subcellular location is the cytoplasm. It carries out the reaction (2S,6S)-2,6-diaminopimelate = meso-2,6-diaminopimelate. It participates in amino-acid biosynthesis; L-lysine biosynthesis via DAP pathway; DL-2,6-diaminopimelate from LL-2,6-diaminopimelate: step 1/1. Its function is as follows. Catalyzes the stereoinversion of LL-2,6-diaminopimelate (L,L-DAP) to meso-diaminopimelate (meso-DAP), a precursor of L-lysine and an essential component of the bacterial peptidoglycan. In Bacillus cereus (strain AH820), this protein is Diaminopimelate epimerase.